A 1293-amino-acid polypeptide reads, in one-letter code: Cilia- and flagella-associated protein 57 A (1293 aa).

A WD 1 repeat occupies 72 to 113; the sequence is PGTKGITCMTLSPSKRLLAWSEDCDSGIIVVFDLIKLDKLEK. The segment at 117–143 is disordered; the sequence is QNYQEPSDKDKLDKQAEKDRRDRFEKE. Residues 122–143 show a composition bias toward basic and acidic residues; it reads PSDKDKLDKQAEKDRRDRFEKE. 5 WD repeats span residues 309 to 348, 359 to 398, 411 to 450, 535 to 574, and 700 to 739; these read PKNE…KNPY, DMKA…MQLN, FHSD…LENS, RGSG…PQKT, and SHFG…YQVK. 3 coiled-coil regions span residues 756–1016, 1045–1079, and 1209–1285; these read RDQY…REKT, IKEL…FKRT, and INHL…QIQN.

Belongs to the CFAP57 family. In terms of assembly, forms a heterodimer with CFAP57C. Associates with components of the nexin-dynein regulatory complex (N-DRC) and the CFAP184:CFAP263 complex.

It is found in the cell projection. Its subcellular location is the cilium. Its function is as follows. Associates with components of the nexin-dynein regulatory complex (N-DRC), a key regulator of ciliary/flagellar motility, and might act as an inner dynein arm (IDA) hub or linkage. This is Cilia- and flagella-associated protein 57 A (CFAP57A) from Tetrahymena thermophila (strain SB210).